We begin with the raw amino-acid sequence, 225 residues long: Insulin-induced gene 2 protein (225 aa).

Residues 1–28 (MAEGETKSPGPKKCGPYISSVTSQSVNL) are Cytoplasmic-facing. A helical membrane pass occupies residues 29–51 (MIRGVVLFFIGVFLALVLNLLQI). The Lumenal portion of the chain corresponds to 52–70 (QRNVTLFPPDVIASIFSSA). The helical transmembrane segment at 71-88 (WWVPPCCGTASAVIGLLY) threads the bilayer. Residues 89-103 (PCIDRHLGEPHKFKR) are Cytoplasmic-facing. A helical transmembrane segment spans residues 104–126 (EWSSVMRCVAVFVGINHASAKVD). The Lumenal segment spans residues 127–129 (FDN). Residues 130–148 (NIQLSLTLAALSIGLWWTF) form a helical membrane-spanning segment. The Cytoplasmic segment spans residues 149–153 (DRSRS). Phosphoserine is present on Ser-151. Residues 154 to 175 (GFGLGVGIAFLATVVTQLLVYN) traverse the membrane as a helical segment. Topologically, residues 176 to 189 (GVYQYTSPDFLYVR) are lumenal. Residues 190–207 (SWLPCIFFAGGITMGNIG) traverse the membrane as a helical segment. Residues 208 to 225 (RQLAMYECKVIAEKSHQE) lie on the Cytoplasmic side of the membrane. Position 215 is a cysteine sulfenic acid (-SOH); alternate (Cys-215). Cys-215 participates in a covalent cross-link: Glycyl cysteine thioester (Cys-Gly) (interchain with G-Cter in ubiquitin); alternate. The KxHxx motif lies at 219–225 (AEKSHQE).

The protein belongs to the INSIG family. Interacts with SCAP; interaction is direct and only takes place in the presence of sterols; it prevents interaction between SCAP and the coat protein complex II (COPII). Associates with the SCAP-SREBP complex (composed of SCAP and SREBF1/SREBP1 or SREBF2/SREBP2); association is mediated via its interaction with SCAP and only takes place in the presence of sterols. Interacts with RNF139. Interacts with RNF145. Post-translationally, phosphorylation at Ser-151 by PCK1 reduces binding to oxysterol, disrupting the interaction between INSIG2 and SCAP, thereby promoting nuclear translocation of SREBP proteins (SREBF1/SREBP1 or SREBF2/SREBP2) and subsequent transcription of downstream lipogenesis-related genes. In terms of processing, polyubiquitinated by AMFR/gp78 at Cys-215 in some tissues such as adipose tissues, undifferentiated myoblasts and liver, leading to its degradation. In differentiated myotubes, Cys-215 oxidation prevents ubiquitination at the same site, resulting in protein stabilization. Oxidized at Cys-215 in differentiated myotubes, preventing ubiquitination at the same site, and resulting in protein stabilization.

The protein resides in the endoplasmic reticulum membrane. Functionally, oxysterol-binding protein that mediates feedback control of cholesterol synthesis by controlling both endoplasmic reticulum to Golgi transport of SCAP and degradation of HMGCR. Acts as a negative regulator of cholesterol biosynthesis by mediating the retention of the SCAP-SREBP complex in the endoplasmic reticulum, thereby blocking the processing of sterol regulatory element-binding proteins (SREBPs) SREBF1/SREBP1 and SREBF2/SREBP2. Binds oxysterol, including 22-hydroxycholesterol, 24-hydroxycholesterol, 25-hydroxycholesterol and 27-hydroxycholesterol, regulating interaction with SCAP and retention of the SCAP-SREBP complex in the endoplasmic reticulum. In presence of oxysterol, interacts with SCAP, retaining the SCAP-SREBP complex in the endoplasmic reticulum, thereby preventing SCAP from escorting SREBF1/SREBP1 and SREBF2/SREBP2 to the Golgi. Sterol deprivation or phosphorylation by PCK1 reduce oxysterol-binding, disrupting the interaction between INSIG2 and SCAP, thereby promoting Golgi transport of the SCAP-SREBP complex, followed by processing and nuclear translocation of SREBF1/SREBP1 and SREBF2/SREBP2. Also regulates cholesterol synthesis by regulating degradation of HMGCR: initiates the sterol-mediated ubiquitin-mediated endoplasmic reticulum-associated degradation (ERAD) of HMGCR via recruitment of the reductase to the ubiquitin ligase RNF139. In Pongo abelii (Sumatran orangutan), this protein is Insulin-induced gene 2 protein.